We begin with the raw amino-acid sequence, 281 residues long: Small ribosomal subunit protein uS2 (281 aa).

A disordered region spans residues 229–281 (RSGANKTEGEAAEQPMAAWEKELLTNEAPAEASAEAAAPAAAEGETAEAPKAE). The segment covering 255–275 (EAPAEASAEAAAPAAAEGETA) has biased composition (low complexity).

It belongs to the universal ribosomal protein uS2 family.

The chain is Small ribosomal subunit protein uS2 from Bifidobacterium longum subsp. infantis (strain ATCC 15697 / DSM 20088 / JCM 1222 / NCTC 11817 / S12).